We begin with the raw amino-acid sequence, 373 residues long: Bifunctional enzyme IspD/IspF (373 aa).

The segment at 1-212 (MPDITLILLG…PCIEAPSGKT (212 aa)) is 2-C-methyl-D-erythritol 4-phosphate cytidylyltransferase. The tract at residues 213–373 (LTGFGLDIHP…NLTYYNWKQK (161 aa)) is 2-C-methyl-D-erythritol 2,4-cyclodiphosphate synthase. Residues Asp-219 and His-221 each contribute to the a divalent metal cation site. 4-CDP-2-C-methyl-D-erythritol 2-phosphate-binding positions include 219–221 (DIH) and 245–246 (HS). His-253 lines the a divalent metal cation pocket. 4-CDP-2-C-methyl-D-erythritol 2-phosphate contacts are provided by residues 267 to 269 (DIG), 272 to 276 (YPDTD), 343 to 346 (TTAE), Phe-350, and Arg-353.

The protein in the N-terminal section; belongs to the IspD/TarI cytidylyltransferase family. IspD subfamily. This sequence in the C-terminal section; belongs to the IspF family. It depends on a divalent metal cation as a cofactor.

The enzyme catalyses 2-C-methyl-D-erythritol 4-phosphate + CTP + H(+) = 4-CDP-2-C-methyl-D-erythritol + diphosphate. It catalyses the reaction 4-CDP-2-C-methyl-D-erythritol 2-phosphate = 2-C-methyl-D-erythritol 2,4-cyclic diphosphate + CMP. The protein operates within isoprenoid biosynthesis; isopentenyl diphosphate biosynthesis via DXP pathway; isopentenyl diphosphate from 1-deoxy-D-xylulose 5-phosphate: step 2/6. It participates in isoprenoid biosynthesis; isopentenyl diphosphate biosynthesis via DXP pathway; isopentenyl diphosphate from 1-deoxy-D-xylulose 5-phosphate: step 4/6. Bifunctional enzyme that catalyzes the formation of 4-diphosphocytidyl-2-C-methyl-D-erythritol from CTP and 2-C-methyl-D-erythritol 4-phosphate (MEP) (IspD), and catalyzes the conversion of 4-diphosphocytidyl-2-C-methyl-D-erythritol 2-phosphate (CDP-ME2P) to 2-C-methyl-D-erythritol 2,4-cyclodiphosphate (ME-CPP) with a corresponding release of cytidine 5-monophosphate (CMP) (IspF). This chain is Bifunctional enzyme IspD/IspF, found in Sulfurovum sp. (strain NBC37-1).